Consider the following 524-residue polypeptide: Chromosomal replication initiator protein DnaA (524 aa).

The segment at 1–105 is domain I, interacts with DnaA modulators; sequence MSQNSSSLLE…EQEIPETPAQ (105 aa). Residues 95–183 form a disordered region; sequence PEQEIPETPA…PAHNPNREVS (89 aa). A domain II region spans residues 106-182; that stretch reads QEFKYQPDAP…TPAHNPNREV (77 aa). A compositionally biased stretch (pro residues) spans 148-158; it reads APEPHPAPIAD. A domain III, AAA+ region region spans residues 183–399; the sequence is SLNPKYTFES…GALIRVSAYS (217 aa). Positions 227, 229, 230, and 231 each coordinate ATP. Residues 400–524 are domain IV, binds dsDNA; the sequence is SLINQPIDKE…TQLIKSRGRN (125 aa).

It belongs to the DnaA family. As to quaternary structure, oligomerizes as a right-handed, spiral filament on DNA at oriC.

Its subcellular location is the cytoplasm. In terms of biological role, plays an essential role in the initiation and regulation of chromosomal replication. ATP-DnaA binds to the origin of replication (oriC) to initiate formation of the DNA replication initiation complex once per cell cycle. Binds the DnaA box (a 9 base pair repeat at the origin) and separates the double-stranded (ds)DNA. Forms a right-handed helical filament on oriC DNA; dsDNA binds to the exterior of the filament while single-stranded (ss)DNA is stabiized in the filament's interior. The ATP-DnaA-oriC complex binds and stabilizes one strand of the AT-rich DNA unwinding element (DUE), permitting loading of DNA polymerase. After initiation quickly degrades to an ADP-DnaA complex that is not apt for DNA replication. Binds acidic phospholipids. This chain is Chromosomal replication initiator protein DnaA, found in Corynebacterium glutamicum (strain R).